Consider the following 181-residue polypeptide: MILSHRWQCTIVPVDSGRQRRAYPEGVTENLNTIDSIRLLRLDPGLPMPRRAHRGDAGVDLHSTTDVVIAPGHRELVGTGVAIALPLGTVGLIHPRSGLAAREGLSIVNAPGTVDADYRGEIKVCLINLDPSTPITITRGDRIAQLIIQRVELVDFVEVDELDETTRGDQGHGSTGRGSTA.

Substrate contacts are provided by residues 96–98 (RSG), Asn109, 113–115 (TVD), and Lys123.

This sequence belongs to the dUTPase family. Requires Mg(2+) as cofactor.

The catalysed reaction is dUTP + H2O = dUMP + diphosphate + H(+). It participates in pyrimidine metabolism; dUMP biosynthesis; dUMP from dCTP (dUTP route): step 2/2. Its function is as follows. This enzyme is involved in nucleotide metabolism: it produces dUMP, the immediate precursor of thymidine nucleotides and it decreases the intracellular concentration of dUTP so that uracil cannot be incorporated into DNA. The chain is Deoxyuridine 5'-triphosphate nucleotidohydrolase from Corynebacterium efficiens (strain DSM 44549 / YS-314 / AJ 12310 / JCM 11189 / NBRC 100395).